Reading from the N-terminus, the 372-residue chain is Non-structural protein NS2 (372 aa).

Residues 259-326 (NQIEKQHTTH…QESEPESPSF (68 aa)) are disordered. Low complexity predominate over residues 299 to 309 (TETTSTSSSHH).

This is Non-structural protein NS2 (NS) from Aedes albopictus (Asian tiger mosquito).